The chain runs to 208 residues: FMN-dependent NADH:quinone oxidoreductase 1 (208 aa).

Residues Ser-10, 15 to 17 (SES), and 97 to 100 (MWNF) contribute to the FMN site.

This sequence belongs to the azoreductase type 1 family. In terms of assembly, homodimer. FMN is required as a cofactor.

It carries out the reaction 2 a quinone + NADH + H(+) = 2 a 1,4-benzosemiquinone + NAD(+). The enzyme catalyses N,N-dimethyl-1,4-phenylenediamine + anthranilate + 2 NAD(+) = 2-(4-dimethylaminophenyl)diazenylbenzoate + 2 NADH + 2 H(+). Functionally, quinone reductase that provides resistance to thiol-specific stress caused by electrophilic quinones. Its function is as follows. Also exhibits azoreductase activity. Catalyzes the reductive cleavage of the azo bond in aromatic azo compounds to the corresponding amines. This is FMN-dependent NADH:quinone oxidoreductase 1 from Bradyrhizobium diazoefficiens (strain JCM 10833 / BCRC 13528 / IAM 13628 / NBRC 14792 / USDA 110).